The sequence spans 416 residues: Gamma-glutamyl phosphate reductase (416 aa).

The protein belongs to the gamma-glutamyl phosphate reductase family.

The protein localises to the cytoplasm. The catalysed reaction is L-glutamate 5-semialdehyde + phosphate + NADP(+) = L-glutamyl 5-phosphate + NADPH + H(+). It functions in the pathway amino-acid biosynthesis; L-proline biosynthesis; L-glutamate 5-semialdehyde from L-glutamate: step 2/2. Functionally, catalyzes the NADPH-dependent reduction of L-glutamate 5-phosphate into L-glutamate 5-semialdehyde and phosphate. The product spontaneously undergoes cyclization to form 1-pyrroline-5-carboxylate. In Streptococcus thermophilus (strain ATCC BAA-491 / LMD-9), this protein is Gamma-glutamyl phosphate reductase.